Reading from the N-terminus, the 408-residue chain is Heparan-sulfate 6-O-sulfotransferase 1 (408 aa).

The Cytoplasmic segment spans residues 8–14 (MVERTSK). Residues 15 to 35 (FLLIVAASVCFMLILYQYVGP) form a helical; Signal-anchor for type II membrane protein membrane-spanning segment. The Lumenal portion of the chain corresponds to 36–408 (GLSLGAPSGR…DYMSHIIEKW (373 aa)). Residue 90-98 (HIQKTGGTT) participates in 3'-phosphoadenylyl sulfate binding. Residues 120–121 (KK), Arg-137, Trp-142, and His-147 contribute to the substrate site. The active-site Proton acceptor is the His-147. Residues Arg-182 and Ser-190 each coordinate 3'-phosphoadenylyl sulfate. His-194 and Trp-201 together coordinate substrate. Asn-261 carries N-linked (GlcNAc...) asparagine glycosylation. 314–316 (MQY) contacts 3'-phosphoadenylyl sulfate. A glycan (N-linked (GlcNAc...) asparagine) is linked at Asn-317. 320–321 (RA) provides a ligand contact to 3'-phosphoadenylyl sulfate. An N-linked (GlcNAc...) asparagine glycan is attached at Asn-328. Residues 348–382 (AKDLFQQRYQYKRQLERMEQRIKNREERLLHRSNE) adopt a coiled-coil conformation. Residues 376–396 (LLHRSNEALPKEETEEQGRLP) are disordered.

Belongs to the sulfotransferase 6 family. N-glycosylated.

The protein resides in the membrane. The enzyme catalyses alpha-D-glucosaminyl-[heparan sulfate](n) + 3'-phosphoadenylyl sulfate = 6-sulfo-alpha-D-glucosaminyl-[heparan sulfate](n) + adenosine 3',5'-bisphosphate + H(+). In terms of biological role, 6-O-sulfation enzyme which catalyzes the transfer of sulfate from 3'-phosphoadenosine 5'-phosphosulfate (PAPS) to position 6 of the N-sulfoglucosamine residue (GlcNS) of heparan sulfate. May also play a role in limb development. The polypeptide is Heparan-sulfate 6-O-sulfotransferase 1 (Gallus gallus (Chicken)).